A 224-amino-acid polypeptide reads, in one-letter code: Envelope glycoprotein L (224 aa).

The N-terminal stretch at 1–19 (MGILGWVGLIAVGVLCVRG) is a signal peptide. Residues 20–161 (GLPSTEYVIR…FDYSRTRRCV (142 aa)) form an interaction with gH region. One can recognise a gL alphaherpesvirus-type domain in the interval 23–201 (STEYVIRSRV…LTTPPPIIAT (179 aa)). 2 disulfide bridges follow: cysteine 44/cysteine 76 and cysteine 149/cysteine 160. Positions 161-224 (VGRQDLGPTN…RRRRPHSRRL (64 aa)) are disordered. The span at 213-224 (KSRRRRPHSRRL) shows a compositional bias: basic residues.

Belongs to the herpesviridae glycoprotein L (gL) family. Alphaherpesvirinae gL subfamily. In terms of assembly, interacts with glycoprotein H (gH); this interaction is necessary for the correct processing and cell surface expression of gH. The heterodimer gH/gL seems to interact with gB trimers during fusion.

Its subcellular location is the virion membrane. It is found in the host cell membrane. It localises to the host Golgi apparatus. The protein resides in the host trans-Golgi network. Its function is as follows. The heterodimer glycoprotein H-glycoprotein L is required for the fusion of viral and plasma membranes leading to virus entry into the host cell. Acts as a functional inhibitor of gH and maintains gH in an inhibited form. Upon binding to host integrins, gL dissociates from gH leading to activation of the viral fusion glycoproteins gB and gH. The polypeptide is Envelope glycoprotein L (Human herpesvirus 1 (strain 17) (HHV-1)).